The following is a 420-amino-acid chain: Mannose-1-phosphate guanylyltransferase regulatory subunit alpha (420 aa).

The segment at 2–251 is substrate-binding domain; it reads LKAVILIGGP…DGIWSQIKSA (250 aa). Glu85 and Gln247 together coordinate GDP-alpha-D-mannose. A hexapeptide repeat domain region spans residues 273–420; it reads LAKHTPGGPW…SRSFTNQIIL (148 aa). Positions 356–384 are C-loop; sequence TPSDPNPNDPRARMDSESLFKDGKLLPAI.

It belongs to the transferase hexapeptide repeat family. Component of the GMPPA-GMPPB mannose-1-phosphate guanylyltransferase complex composed of 4 GMPPA subunits and 8 GMPPB subunits; the complex is organized into three layers, a central layer made up of 2 GMPPA dimers sandwiched between two layers each made up of 2 GMPPB dimers. Expressed in fibroblasts (at protein level).

The protein localises to the cytoplasm. Functionally, regulatory subunit of the GMPPA-GMPPB mannose-1-phosphate guanylyltransferase complex; reduces the catalytic activity of GMPPB when part of the complex. Mediates allosteric feedback inhibition of GMPPB catalytic activity upon binding GDP-alpha-D-mannose. Together with GMPPB regulates GDP-alpha-D-mannose levels. This chain is Mannose-1-phosphate guanylyltransferase regulatory subunit alpha, found in Homo sapiens (Human).